A 247-amino-acid chain; its full sequence is Peptidyl-prolyl cis-trans isomerase FKBP17-2, chloroplastic (247 aa).

The transit peptide at 1 to 79 (MANLFTATAP…SSLTRRFGIG (79 aa)) directs the protein to the chloroplast. A disordered region spans residues 26–64 (QCYASSSNPPEPESSSPPPPPPPPQPLASQQKRKKNVET). Positions 34–51 (PPEPESSSPPPPPPPPQP) are enriched in pro residues. In terms of domain architecture, PPIase FKBP-type spans 141–243 (GDLVVIDLKG…EYIVEIDRVS (103 aa)).

It belongs to the FKBP-type PPIase family.

It localises to the plastid. The protein localises to the chloroplast thylakoid lumen. It catalyses the reaction [protein]-peptidylproline (omega=180) = [protein]-peptidylproline (omega=0). PPIases accelerate the folding of proteins. It catalyzes the cis-trans isomerization of proline imidic peptide bonds in oligopeptides. In Arabidopsis thaliana (Mouse-ear cress), this protein is Peptidyl-prolyl cis-trans isomerase FKBP17-2, chloroplastic (FKBP17-2).